The sequence spans 499 residues: Protein NODULATION SIGNALING PATHWAY 2 (499 aa).

Residues 64–106 (NNTGPAFSDHTASTTSEEEEEEEATTTTMTTTTTTTTTTPEAA) form a disordered region. The span at 88–104 (TTTTMTTTTTTTTTTPE) shows a compositional bias: low complexity. The GRAS domain maps to 106 to 491 (ADDDFKGLRL…RRLLSASLWT (386 aa)). A leucine repeat I (LRI) region spans residues 113–182 (LRLVHLLMAG…AGGAYNSSSK (70 aa)). Positions 201-265 (FQLLQDMSPY…PNGPHLRITA (65 aa)) are VHIID. Positions 232–236 (VHIVD) match the VHIID motif. Residues 281-313 (ETGRRLTAFATSLGQPFSFHHSRLESDETFRPA) are leucine repeat II (LRII). The PFYRE stretch occupies residues 323–414 (LVFNCMLNLP…RVFLGPRIVG (92 aa)). The tract at residues 417–491 (ARIYRTGGGG…RRLLSASLWT (75 aa)) is SAW.

It belongs to the GRAS family. As to quaternary structure, interacts with IPN2. Binds to RAD1. Interacts with RAM1. As to expression, highly expressed in roots.

The protein resides in the nucleus membrane. It localises to the endoplasmic reticulum. Functionally, transcriptional regulator essential for Nod-factor-induced gene expression. Acts downstream of calcium spiking and a calcium/calmodulin-dependent protein kinase required for activation of early nodulation gene expression. Transcription factor involved in the induction of NIN and ENOD40 genes, which are required for rhizobial infection and early nodule development. Does not seem to contribute to the early steps of the arbuscular mycorrhizal fungus infection and colonization processes in roots. Transcription factor involved in the positive regulation of the beta-carotene isomerase D27, which participates in a pathway leading to biosynthesis of strigolactones in roots. This is Protein NODULATION SIGNALING PATHWAY 2 from Lotus japonicus (Lotus corniculatus var. japonicus).